Consider the following 355-residue polypeptide: (3aS,4S,5R,7aS)-5-hydroxy-7a-methyl-1-oxo-octahydro-1H-indene-4-carboxyl-CoA dehydrogenase (355 aa).

FMN-binding positions include 21-23, 173-175, and 196-197; these read GMG, AGG, and GT.

The protein belongs to the nitronate monooxygenase family.

It carries out the reaction (3aS,4S,5R,7aS)-5-hydroxy-7a-methyl-1-oxo-octahydro-1H-indene-4-carboxyl-CoA + NAD(+) = (5R,7aS)-5-hydroxy-7a-methyl-1-oxo-2,3,5,6,7,7a-hexahydro-1H-indene-carboxyl-CoA + NADH + H(+). It participates in steroid metabolism; cholesterol degradation. With respect to regulation, requires the presence of IpdF. Its function is as follows. Involved in the final steps of cholesterol and steroid degradation. Probably catalyzes the introduction of a double bound into the C ring of 5OH-HIC-CoA, leading to the formation of (5R,7aS)-5-hydroxy-7a-methyl-1-oxo-3,5,6,7-tetrahydro-2H-indene-4-carboxyl-CoA. In Mycobacterium tuberculosis (strain ATCC 25618 / H37Rv), this protein is (3aS,4S,5R,7aS)-5-hydroxy-7a-methyl-1-oxo-octahydro-1H-indene-4-carboxyl-CoA dehydrogenase.